The chain runs to 4293 residues: Polycystin-1 (4293 aa).

Residues 1–23 (MPLGAPALLALALGLGLWLGALA) form the signal peptide. Residues 24-67 (GDPGRGCGPCPLPCFCGPAPDAACRVNCSGRWLQTLGPSLRIPA) enclose the LRRNT domain. Residues 24–3066 (GDPGRGCGPC…IFPEPSASIN (3043 aa)) lie on the Extracellular side of the membrane. N-linked (GlcNAc...) asparagine glycosylation is found at Asn-50 and Asn-89. 2 LRR repeats span residues 68–91 (DATA…VNLS) and 92–113 (ALVE…VFAN). N-linked (GlcNAc...) asparagine glycosylation is found at Asn-116 and Asn-121. Positions 125 to 178 (NPFECNCGLAWLPRWAKEHQVHVVQSEATTCRGPIPLAGQPLLSIPLLDNACGE) constitute an LRRCT domain. In terms of domain architecture, WSC spans 177–271 (GEEYVACLPD…PTLLQHTFPA (95 aa)). Asn-187 and Asn-239 each carry an N-linked (GlcNAc...) asparagine glycan. Residues 272–359 (SPGATLVGPH…VQVEATPTVL (88 aa)) enclose the PKD 1 domain. Asn-370 carries N-linked (GlcNAc...) asparagine glycosylation. Residues 415 to 530 (GNGHCYRLVA…CSAPHSYVCE (116 aa)) enclose the C-type lectin domain. 2 disulfide bridges follow: Cys-436–Cys-529 and Cys-507–Cys-521. The disordered stretch occupies residues 613 to 632 (GGAAAVPEGSSEPDNRTEPA). Asn-627 carries N-linked (GlcNAc...) asparagine glycosylation. An LDL-receptor class A; atypical domain is found at 633–666 (PKCVPEELWCPGANVCIPFDASCNSHVCINGSVS). 2 disulfide bridges follow: Cys-635/Cys-648 and Cys-642/Cys-660. N-linked (GlcNAc...) asparagine glycans are attached at residues Asn-662, Asn-740, Asn-804, Asn-835, Asn-848, Asn-859, Asn-884, Asn-915, Asn-998, Asn-1004, Asn-1028, Asn-1084, Asn-1096, Asn-1107, Asn-1172, Asn-1188, Asn-1234, Asn-1263, Asn-1330, Asn-1342, Asn-1376, Asn-1444, Asn-1449, Asn-1468, Asn-1535, Asn-1548, Asn-1557, Asn-1643, Asn-1657, Asn-1706, Asn-1730, Asn-1788, Asn-1831, Asn-1863, and Asn-1876. PKD domains are found at residues 849 to 922 (ATAT…RVTA), 929 to 1014 (LRAV…NKMH), 1017 to 1123 (WVSA…LPNV), 1121 to 1209 (PNVA…LHGL), 1207 to 1292 (HGLT…EVLH), 1288 to 1377 (LEVL…IRNI), 1376 to 1463 (NITL…VLVT), 1462 to 1545 (VTGI…VRGL), 1544 to 1629 (GLTI…IEGL), 1630 to 1718 (QVAG…VESL), 1716 to 1802 (ESLI…VGGL), 1804 to 1886 (IRTS…IVNL), 1885 to 1970 (NLML…VVGL), 1972 to 2053 (VPNC…MVEV), and 2056 to 2144 (IIQY…ACRE). Asn-1987, Asn-2046, Asn-2070, Asn-2121, Asn-2244, Asn-2349, Asn-2391, Asn-2408, Asn-2414, Asn-2563, Asn-2640, Asn-2713, Asn-2749, Asn-2813, Asn-2836, Asn-2873, Asn-2948, and Asn-2986 each carry an N-linked (GlcNAc...) asparagine glycan. Positions 2142–2828 (CREPEVEVAL…QLIFLVDSNP (687 aa)) constitute an REJ domain. The GAIN-B domain maps to 2857 to 3055 (PIEQLAAERA…SLFVPPSHVQ (199 aa)). A disulfide bridge connects residues Cys-3007 and Cys-3035. Positions 3007-3055 (CQYFSEEMMMWRTEGIVPLEETSPSQAVCLTRHLTAFGASLFVPPSHVQ) are GPS. Residues 3067 to 3087 (YIVLLTCVICLVTYVVMAMIL) traverse the membrane as a helical segment. Residues 3088 to 3269 (RKLDQLDVSR…DRPPRSRFTR (182 aa)) are Cytoplasmic-facing. Residues 3110-3225 (FKYEILVKTG…EANGGLVEKE (116 aa)) form the PLAT domain. The helical transmembrane segment at 3270–3290 (VQRVTCCVLLLCLFLAANAVW) threads the bilayer. At 3291 to 3315 (YGVVRDTTYSMGPVSSLISPGVDTV) the chain is on the extracellular side. The chain crosses the membrane as a helical span at residues 3316–3336 (AIGLVSSVVVYPVYLAVLFLF). The Cytoplasmic segment spans residues 3337–3549 (RMSRSKVSGD…LPAWCAPLAH (213 aa)). The chain crosses the membrane as a helical span at residues 3550–3570 (GLSLLLVAVAVAVSGWIGASF). Residues 3571-3572 (PP) are Extracellular-facing. A helical membrane pass occupies residues 3573 to 3593 (SVSVMWLLSSSSSFLASFLGW). Topologically, residues 3594–3655 (EPLKVLLEAL…LAKEEARKVK (62 aa)) are cytoplasmic. Residues 3656-3676 (RLHDMLKRLLVYMLFLLVTLL) traverse the membrane as a helical segment. Residues 3677 to 3891 (ANYGDASCHG…RLSTGLSLPL (215 aa)) are Extracellular-facing. Asn-3728 and Asn-3780 each carry an N-linked (GlcNAc...) asparagine glycan. A helical transmembrane segment spans residues 3892–3912 (LTSVCLLLFALYFSMAEVQTW). The Cytoplasmic segment spans residues 3913–3925 (RKDGCACTARPDT). Residues 3926-3946 (WARCLLVILTAATGLVRLAQL) form a helical membrane-spanning segment. The Extracellular segment spans residues 3947–3974 (GIADRQWTHFVQDHPRHFTSFDQVAQLG). The chain crosses the membrane as a helical span at residues 3975 to 3995 (SVARGLAASLLFLLLVKAAQQ). Residues 3996-4017 (LRFVRQWSVFGKTLCRALPELM) are Cytoplasmic-facing. Residues 4018–4038 (GATLGLVLLGVAYAQMAILLI) form a helical membrane-spanning segment. The Extracellular portion of the chain corresponds to 4039-4080 (SSGADTLYNMARAFLVLCPGARVPTLCPSESWYLSPLLCVGL). The chain crosses the membrane as a helical span at residues 4081-4100 (WALRVWGALRLGAILLRWRY). Residues 4101–4293 (HALRGELYRP…PNNKVHPSST (193 aa)) are Cytoplasmic-facing. Disordered regions lie at residues 4150-4197 (PLPS…STLK) and 4235-4293 (SLQG…PSST). The segment covering 4153 to 4172 (SRSSRGSKSSPVVLPPSSGS) has biased composition (low complexity). At Ser-4156 the chain carries Phosphoserine; by PRKX; in vitro. The segment covering 4173-4195 (EASHPSTSSSQPDGPSASLSRST) has biased composition (polar residues). The stretch at 4210–4241 (ESLLVQFDRLNQATEDVYQLEQQLQSLQGHGH) forms a coiled coil. The span at 4238-4256 (GHGHNGPPSSPSPGCFPGS) shows a compositional bias: low complexity. Positions 4265–4276 (SRASQGLDQTVG) are enriched in polar residues.

It belongs to the polycystin family. As to quaternary structure, component of the heterotetrameric polycystin channel complex with PKD2; the tetramer contains one PKD1 chain and three PKD2 chains. Interacts with PKD2; the interaction is required for ciliary localization. Interacts with PKD2L1. Interacts with PRKX; involved in differentiation and controlled morphogenesis of the kidney. Interacts (via extracellular domain) with WNT3A, WNT4 and WNT9B. Interacts with WNT5A, DVL1 and DVL2. Interacts with NPHP1 (via SH3 domain). Interacts with BBS1, BBS4, BBS5 and TTC8. Interacts with RGS7. Interacts (via C-terminal domain) with RABEP1; the interaction connects PKD1:PKD2 to GGA1 and ARL3 that mediate the ciliary targeting. Interacts (via the PKD repeats in the N-terminal extracellular region) with EPCIP; the interaction is not dependent on N-glycosylation of either protein. Post-translationally, N-glycosylated. In terms of processing, after synthesis, undergoes autoproteolytic cleavage between Leu-3040 and Thr-3041 in the GPS region of the GAIN-B domain. Cleavage at the GPS region occurs through a cis-autoproteolytic mechanism involving an ester-intermediate via N-O acyl rearrangement. This process takes place in the early secretory pathway, depends on initial N-glycosylation, and requires the REJ domain. PKD1 is ubiquitously and incompletely cleaved in wild-type mice, so that uncleaved and cleaved PKD1 molecules coexist. The differential patterns of cleavage during embryonic development, as well as in adult mice, suggest different functions of uncleaved and cleaved molecules.

The protein resides in the cell membrane. Its subcellular location is the cell projection. It is found in the cilium. The protein localises to the endoplasmic reticulum. It localises to the golgi apparatus. The protein resides in the vesicle. Its subcellular location is the secreted. It is found in the extracellular exosome. Component of a heteromeric calcium-permeable ion channel formed by PKD1 and PKD2 that is activated by interaction between PKD1 and a Wnt family member, such as WNT3A and WNT9B. Both PKD1 and PKD2 are required for channel activity. Involved in renal tubulogenesis. Involved in fluid-flow mechanosensation by the primary cilium in renal epithelium. Acts as a regulator of cilium length, together with PKD2. The dynamic control of cilium length is essential in the regulation of mechanotransductive signaling. The cilium length response creates a negative feedback loop whereby fluid shear-mediated deflection of the primary cilium, which decreases intracellular cAMP, leads to cilium shortening and thus decreases flow-induced signaling. May be an ion-channel regulator. Involved in adhesive protein-protein and protein-carbohydrate interactions. Likely to be involved with polycystin-1-interacting protein 1 in the detection, sequestration and exocytosis of senescent mitochondria. The sequence is that of Polycystin-1 from Mus musculus (Mouse).